The primary structure comprises 571 residues: Streptolysin O (571 aa).

The signal sequence occupies residues Met-1–Ser-33. The disordered stretch occupies residues Asn-30 to Glu-108. A compositionally biased stretch (low complexity) spans Asn-37–Glu-48. Basic and acidic residues-rich tracts occupy residues Pro-50–Asp-68 and Ala-79–Glu-108. 4 consecutive transmembrane segments (beta stranded) span residues Lys-260–Ile-273, Ile-280–Glu-289, Ser-358–Ala-367, and Lys-375–Ser-387. Residues Glu-529–Arg-539 carry the Conserved undecapeptide motif. The Cholesterol binding motif lies at Thr-561–Leu-562.

It belongs to the cholesterol-dependent cytolysin family. As to quaternary structure, homooligomeric pore complex of 35 to 50 subunits; when inserted in the host membrane.

It is found in the secreted. Its subcellular location is the host cell membrane. Its function is as follows. A cholesterol-dependent toxin that causes cytolysis by forming pores in cholesterol containing host membranes. After binding to target membranes, the protein undergoes a major conformation change, leading to its insertion in the host membrane and formation of an oligomeric pore complex. Cholesterol is required for binding to host membranes, membrane insertion and pore formation; cholesterol binding is mediated by a Thr-Leu pair in the C-terminus. Can be reversibly inactivated by oxidation. In Streptococcus pyogenes serotype M3 (strain ATCC BAA-595 / MGAS315), this protein is Streptolysin O (slo).